A 282-amino-acid chain; its full sequence is Undecaprenyl-diphosphatase (282 aa).

Transmembrane regions (helical) follow at residues 90–110, 121–141, 165–185, 194–214, 228–248, and 256–276; these read YRLGWYVIIGTIPICVMGLLF, LWVVATALVVFSGVIALAEYL, LALVPGVSRSGSTISAGLFLG, FGFLLAIPAVFASGLFSLPDA, QLLVATLIAFVVGLAAVSWFL, and MYWFVGYRVVVGVVVLILLAT.

Belongs to the UppP family.

It localises to the cell membrane. It carries out the reaction di-trans,octa-cis-undecaprenyl diphosphate + H2O = di-trans,octa-cis-undecaprenyl phosphate + phosphate + H(+). Its function is as follows. Catalyzes the dephosphorylation of undecaprenyl diphosphate (UPP). Confers resistance to bacitracin. This chain is Undecaprenyl-diphosphatase, found in Mycobacterium marinum (strain ATCC BAA-535 / M).